The primary structure comprises 120 residues: Thiosulfate sulfurtransferase 16, chloroplastic (120 aa).

Residues Leu20–Ala120 enclose the Rhodanese domain. Cys80 functions as the Cysteine persulfide intermediate in the catalytic mechanism. Residue Arg85 coordinates substrate.

In terms of assembly, monomer.

The protein localises to the plastid. Its subcellular location is the chloroplast. It carries out the reaction thiosulfate + hydrogen cyanide = thiocyanate + sulfite + 2 H(+). Thought to act during the early stages of leaf senescence. Catalyzes the transfer of a sulfur ion from a donor to cyanide or to other thiol compounds. Substrate preference is thiosulfate &gt; 3-mercaptopyruvate. This is Thiosulfate sulfurtransferase 16, chloroplastic (STR16) from Arabidopsis thaliana (Mouse-ear cress).